The chain runs to 1183 residues: Polyphosphatidylinositol phosphatase INP52 (1183 aa).

The span at 133 to 153 (PPSISTHSSRSSLRSSSSRSL) shows a compositional bias: low complexity. The interval 133-161 (PPSISTHSSRSSLRSSSSRSLNAQEQAPK) is disordered. Residue Ser152 is modified to Phosphoserine. Positions 167 to 507 (LRKLLSNGSF…GDQISQIYTG (341 aa)) constitute an SAC domain. Residue Ser522 is modified to Phosphoserine. Positions 955–968 (SPLLSGPSPQPSVV) are enriched in low complexity. Residues 955 to 1183 (SPLLSGPSPQ…VHPLKPCDPN (229 aa)) are disordered. Phosphoserine occurs at positions 1005 and 1016. Thr1032 is modified (phosphothreonine). 3 stretches are compositionally biased toward polar residues: residues 1046-1057 (KPVSLQKSSSEL), 1082-1100 (STAPDEISTSTKNSGVSTT), and 1130-1145 (KLNTSQEHSIKVSPSN). Position 1095 is a phosphoserine (Ser1095).

It belongs to the synaptojanin family. The protein in the central section; belongs to the inositol 1,4,5-trisphosphate 5-phosphatase family. In terms of assembly, interacts (via SAC domain) with BSP1; the interaction is direct. Interacts with ABP1.

It localises to the cytoplasm. It is found in the cytoskeleton. Its subcellular location is the actin patch. The catalysed reaction is a 1,2-diacyl-sn-glycero-3-phospho-(1D-myo-inositol-4,5-bisphosphate) + H2O = a 1,2-diacyl-sn-glycero-3-phospho-(1D-myo-inositol 4-phosphate) + phosphate. Functionally, dephosphorylates a number of phosphatidylinositols (PIs) like phosphatidylinositol 4,5-bisphosphate (PtdIns(4,5)P2), but also phosphatidylinositol 3-phosphate (PtdIns(3)P), phosphatidylinositol 4-phosphate (PtdIns(4)P), and phosphatidylinositol 3,5-bisphosphate (PtdIns(3,5)P2). Controls the cellular levels and subcellular distribution of phosphatidylinositol 3-phosphate and phosphatidylinositol 4,5-bisphosphate. Specifically functions within the early endocytic pathway and actin organization. The protein is Polyphosphatidylinositol phosphatase INP52 of Saccharomyces cerevisiae (strain ATCC 204508 / S288c) (Baker's yeast).